A 334-amino-acid polypeptide reads, in one-letter code: MHTGTTLTQFIIEEQRHIAGASGDFTALLNDIVTAIKTISNAVNKGALIGVMGALDTENVQGETQKKLDVITNEIMIRNNEWAGHLSGMASEEMDDVYSIPSPYPLGKYLLVFDPLDGSSNVDLNISVGTIFSILRSPVPSRAASMEDFLQPGVKQVCAGYALYGSSTMLVLTTGHGVNGFTLDRDIGEFVLTHPNMRIPADTREFAINASNQRFWEAPVQRYVAECLAGSTGPRGRDFNMRWVASMVAEVHRILTRGGIFMYPRDTKDPSKPGRLRLMYEANPMSFIVEQAGGLSTTGYERILDVVPQDLHQRVPVILGSKNEVEVVLEYHNA.

Positions 92, 114, 116, and 117 each coordinate Mg(2+). Substrate contacts are provided by residues D117 to S120 and N209. E281 contacts Mg(2+).

The protein belongs to the FBPase class 1 family. Homotetramer. Mg(2+) is required as a cofactor.

It localises to the cytoplasm. It carries out the reaction beta-D-fructose 1,6-bisphosphate + H2O = beta-D-fructose 6-phosphate + phosphate. Its pathway is carbohydrate biosynthesis; gluconeogenesis. The chain is Fructose-1,6-bisphosphatase class 1 from Nitrosomonas europaea (strain ATCC 19718 / CIP 103999 / KCTC 2705 / NBRC 14298).